Reading from the N-terminus, the 720-residue chain is NADH-ubiquinone oxidoreductase 78 kDa subunit, mitochondrial (720 aa).

Residues 1–23 constitute a mitochondrion transit peptide; that stretch reads MNSIKSHILRSSKRYISASSKRL. Residues 24 to 102 form the 2Fe-2S ferredoxin-type domain; that stretch reads AEVEVTVDGR…GMVVHTDSER (79 aa). Cys-58, Cys-69, Cys-72, and Cys-86 together coordinate [2Fe-2S] cluster. Residues 102 to 141 enclose the 4Fe-4S His(Cys)3-ligated-type domain; the sequence is RIKKAREGVTEMLLENHPLDCPVCDQGGECDLQEQSQRYG. The 4Fe-4S Mo/W bis-MGD-type domain maps to 241–297; it reads LKRTETIDVLDAVGSNIRVDTRGIEVMRVLPRLNDDVNEEWISDKTRFACDGLKTQR.

Belongs to the complex I 75 kDa subunit family. In terms of assembly, core subunit of respiratory chain NADH dehydrogenase (Complex I) which is composed of 45 different subunits. This is the largest subunit of complex I and it is a component of the iron-sulfur (IP) fragment of the enzyme. [2Fe-2S] cluster is required as a cofactor. It depends on [4Fe-4S] cluster as a cofactor.

It is found in the mitochondrion. The catalysed reaction is a ubiquinone + NADH + 5 H(+)(in) = a ubiquinol + NAD(+) + 4 H(+)(out). In terms of biological role, core subunit of the mitochondrial membrane respiratory chain NADH dehydrogenase (Complex I) which catalyzes electron transfer from NADH through the respiratory chain, using ubiquinone as an electron acceptor. Essential for catalysing the entry and efficient transfer of electrons within complex I. Plays a key role in the assembly and stability of complex I and participates in the association of complex I with ubiquinol-cytochrome reductase complex (Complex III) to form supercomplexes. Plays a role in cell wall integrity and is involved in osmotic and oxidative resistance, yeast to hypha transition, and the ability to damage and invade oral epithelial cells. The chain is NADH-ubiquinone oxidoreductase 78 kDa subunit, mitochondrial from Candida albicans (strain SC5314 / ATCC MYA-2876) (Yeast).